The sequence spans 416 residues: Serine hydroxymethyltransferase (416 aa).

(6S)-5,6,7,8-tetrahydrofolate contacts are provided by residues Leu117 and 121–123; that span reads GHL. Lys226 bears the N6-(pyridoxal phosphate)lysine mark. Position 242 (Glu242) interacts with (6S)-5,6,7,8-tetrahydrofolate.

Belongs to the SHMT family. In terms of assembly, homodimer. Requires pyridoxal 5'-phosphate as cofactor.

The protein localises to the cytoplasm. It carries out the reaction (6R)-5,10-methylene-5,6,7,8-tetrahydrofolate + glycine + H2O = (6S)-5,6,7,8-tetrahydrofolate + L-serine. Its pathway is one-carbon metabolism; tetrahydrofolate interconversion. It functions in the pathway amino-acid biosynthesis; glycine biosynthesis; glycine from L-serine: step 1/1. Its function is as follows. Catalyzes the reversible interconversion of serine and glycine with tetrahydrofolate (THF) serving as the one-carbon carrier. This reaction serves as the major source of one-carbon groups required for the biosynthesis of purines, thymidylate, methionine, and other important biomolecules. Also exhibits THF-independent aldolase activity toward beta-hydroxyamino acids, producing glycine and aldehydes, via a retro-aldol mechanism. In Endomicrobium trichonymphae, this protein is Serine hydroxymethyltransferase.